We begin with the raw amino-acid sequence, 329 residues long: T-lymphocyte activation antigen CD86 (329 aa).

The first 23 residues, 1-23 (MDPQCTMGLSNILFVMAFLLSGA), serve as a signal peptide directing secretion. Over 24–247 (APLKIQAYFN…DPQPPPDHIP (224 aa)) the chain is Extracellular. Residues asparagine 33, asparagine 47, asparagine 135, asparagine 146, asparagine 154, asparagine 177, asparagine 192, and asparagine 213 are each glycosylated (N-linked (GlcNAc...) asparagine). An Ig-like V-type domain is found at 33–131 (NETADLPCQF…RIHQMNSELS (99 aa)). Cysteines 40 and 110 form a disulfide. The Ig-like C2-type domain occupies 150–225 (NVYINLTCSS…IFCILETDKT (76 aa)). A disulfide bridge connects residues cysteine 157 and cysteine 218. A helical transmembrane segment spans residues 248 to 268 (WITAVLPTVIICVMVFCLILW). At 269–329 (KWKKKKRPRN…SSCDKSDTCF (61 aa)) the chain is on the cytoplasmic side. The tract at residues 277 to 329 (RNSYKCGTNTMEREESEQTKKREKIHIPERSDEAQRVFKSSKTSSCDKSDTCF) is disordered. Residues 287–312 (MEREESEQTKKREKIHIPERSDEAQR) show a composition bias toward basic and acidic residues.

Homodimer. Interacts with MARCH8. Interacts (via cytoplasmic domain) with PHB1 and PHB2; the interactions increases after priming with CD40. Interacts with CD28. As to quaternary structure, (Microbial infection) Interacts with adenovirus subgroup b fiber protein. In terms of assembly, (Microbial infection) Interacts with Orthopoxvirus OPG038/M2 protein, inhibiting the interaction with CTLA4 and CD28. Polyubiquitinated; which is promoted by MARCH8 and results in endocytosis and lysosomal degradation. Expressed by activated B-lymphocytes and monocytes.

The protein resides in the cell membrane. Its function is as follows. Receptor involved in the costimulatory signal essential for T-lymphocyte proliferation and interleukin-2 production, by binding CD28 or CTLA-4. May play a critical role in the early events of T-cell activation and costimulation of naive T-cells, such as deciding between immunity and anergy that is made by T-cells within 24 hours after activation. Also involved in the regulation of B cells function, plays a role in regulating the level of IgG(1) produced. Upon CD40 engagement, activates NF-kappa-B signaling pathway via phospholipase C and protein kinase C activation. Functionally, interferes with the formation of CD86 clusters, and thus acts as a negative regulator of T-cell activation. (Microbial infection) Acts as a receptor for adenovirus subgroup B. The sequence is that of T-lymphocyte activation antigen CD86 (CD86) from Homo sapiens (Human).